The chain runs to 121 residues: SLFELGKMILQETGKNPAKSYGAYGCNCGVLGRGKPKDATDRCCYVHKCCYKKLTGCNPKKDRYSYSWKDKTIVCGENNPCLKELCECDKAVAICLRENLGTYNKKYRYHLKPFCKKADDC.

7 disulfide bridges follow: Cys26/Cys115, Cys28/Cys44, Cys43/Cys95, Cys49/Cys121, Cys50/Cys88, Cys57/Cys81, and Cys75/Cys86. Residues 105-117 form an important for membrane-damaging activities in eukaryotes and bacteria; heparin-binding region; that stretch reads KKYRYHLKPFCKK.

Belongs to the phospholipase A2 family. Group II subfamily. K49 sub-subfamily. In terms of assembly, homodimer; non-covalently linked. Expressed by the venom gland.

The protein resides in the secreted. Its function is as follows. Snake venom phospholipase A2 (PLA2) homolog that lacks enzymatic activity. Shows myotoxic activity and edema-inducing activities in vivo. A model of myotoxic mechanism has been proposed: an apo Lys49-PLA2 is activated by the entrance of a hydrophobic molecule (e.g. fatty acid) at the hydrophobic channel of the protein leading to a reorientation of a monomer. This reorientation causes a transition between 'inactive' to 'active' states, causing alignment of C-terminal and membrane-docking sites (MDoS) side-by-side and putting the membrane-disruption sites (MDiS) in the same plane, exposed to solvent and in a symmetric position for both monomers. The MDoS region stabilizes the toxin on membrane by the interaction of charged residues with phospholipid head groups. Subsequently, the MDiS region destabilizes the membrane with penetration of hydrophobic residues. This insertion causes a disorganization of the membrane, allowing an uncontrolled influx of ions (i.e. calcium and sodium), and eventually triggering irreversible intracellular alterations and cell death. The chain is Basic phospholipase A2 homolog piratoxin-2 from Bothrops pirajai (Piraja's lancehead).